We begin with the raw amino-acid sequence, 535 residues long: Flavin-containing monooxygenase 1 (535 aa).

An N-acetylalanine modification is found at alanine 2. Residues 2-513 (AKRVAIVGAG…TRIVQESSSP (512 aa)) are Lumenal-facing. FAD-binding positions include 9–13 (GAGVS), glutamate 32, 40–41 (LW), and 61–62 (NS). NADP(+)-binding positions include 60–61 (SN) and 195–198 (SGTD). Residues 514–534 (FESLLKLFAVLALLVSVFLIF) traverse the membrane as a helical segment. Position 535 (leucine 535) is a topological domain, cytoplasmic.

It belongs to the FMO family. The cofactor is FAD. In terms of tissue distribution, liver.

The protein resides in the endoplasmic reticulum membrane. The enzyme catalyses hypotaurine + NADPH + O2 + H(+) = taurine + NADP(+) + H2O. The catalysed reaction is hypotaurine + NADH + O2 + H(+) = taurine + NAD(+) + H2O. It catalyses the reaction trimethylamine + NADPH + O2 = trimethylamine N-oxide + NADP(+) + H2O. It carries out the reaction N,N-dimethylaniline + NADPH + O2 + H(+) = N,N-dimethylaniline N-oxide + NADP(+) + H2O. Functionally, broad spectrum monooxygenase that catalyzes the oxygenation of a wide variety of nitrogen- and sulfur-containing compounds including xenobiotics. Catalyzes the S-oxygenation of hypotaurine to produce taurine, an organic osmolyte involved in cell volume regulation as well as a variety of cytoprotective and developmental processes. In vitro, catalyzes the N-oxygenation of trimethylamine (TMA) to produce trimethylamine N-oxide (TMAO) and could therefore participate to the detoxification of this compound that is generated by the action of gut microbiota from dietary precursors such as choline, choline containing compounds, betaine or L-carnitine. The chain is Flavin-containing monooxygenase 1 (FMO1) from Oryctolagus cuniculus (Rabbit).